Here is a 367-residue protein sequence, read N- to C-terminus: Protein RecA (367 aa).

73 to 80 contacts ATP; it reads GPESSGKT. Residues 345–367 are disordered; that stretch reads DEPVAKKASAKESKEAKELKEVE.

Belongs to the RecA family.

It localises to the cytoplasm. Can catalyze the hydrolysis of ATP in the presence of single-stranded DNA, the ATP-dependent uptake of single-stranded DNA by duplex DNA, and the ATP-dependent hybridization of homologous single-stranded DNAs. It interacts with LexA causing its activation and leading to its autocatalytic cleavage. In Herminiimonas arsenicoxydans, this protein is Protein RecA.